The following is a 520-amino-acid chain: Protein nucleotidyltransferase YdiU (520 aa).

Glycine 108, glycine 110, arginine 111, lysine 130, aspartate 142, glycine 143, arginine 193, and arginine 200 together coordinate ATP. The Proton acceptor role is filled by aspartate 269. Residues asparagine 270 and aspartate 279 each coordinate Mg(2+). Residue aspartate 279 participates in ATP binding.

The protein belongs to the SELO family. Mg(2+) serves as cofactor. The cofactor is Mn(2+).

It carries out the reaction L-seryl-[protein] + ATP = 3-O-(5'-adenylyl)-L-seryl-[protein] + diphosphate. The enzyme catalyses L-threonyl-[protein] + ATP = 3-O-(5'-adenylyl)-L-threonyl-[protein] + diphosphate. The catalysed reaction is L-tyrosyl-[protein] + ATP = O-(5'-adenylyl)-L-tyrosyl-[protein] + diphosphate. It catalyses the reaction L-histidyl-[protein] + UTP = N(tele)-(5'-uridylyl)-L-histidyl-[protein] + diphosphate. It carries out the reaction L-seryl-[protein] + UTP = O-(5'-uridylyl)-L-seryl-[protein] + diphosphate. The enzyme catalyses L-tyrosyl-[protein] + UTP = O-(5'-uridylyl)-L-tyrosyl-[protein] + diphosphate. In terms of biological role, nucleotidyltransferase involved in the post-translational modification of proteins. It can catalyze the addition of adenosine monophosphate (AMP) or uridine monophosphate (UMP) to a protein, resulting in modifications known as AMPylation and UMPylation. The sequence is that of Protein nucleotidyltransferase YdiU from Cupriavidus pinatubonensis (strain JMP 134 / LMG 1197) (Cupriavidus necator (strain JMP 134)).